A 569-amino-acid polypeptide reads, in one-letter code: Glutamate--tRNA ligase (569 aa).

The short motif at 108-118 (PNPDFVLHLGS) is the 'HIGH' region element.

Belongs to the class-I aminoacyl-tRNA synthetase family. Glutamate--tRNA ligase type 2 subfamily.

It localises to the cytoplasm. The enzyme catalyses tRNA(Glu) + L-glutamate + ATP = L-glutamyl-tRNA(Glu) + AMP + diphosphate. In terms of biological role, catalyzes the attachment of glutamate to tRNA(Glu) in a two-step reaction: glutamate is first activated by ATP to form Glu-AMP and then transferred to the acceptor end of tRNA(Glu). The chain is Glutamate--tRNA ligase from Thermofilum pendens (strain DSM 2475 / Hrk 5).